Here is a 488-residue protein sequence, read N- to C-terminus: Aerolysin (488 aa).

Positions 1-24 (MMNRIITANLAFLASSLMLAQVQA) are cleaved as a signal peptide. 2 disulfides stabilise this stretch: cysteine 43–cysteine 99 and cysteine 183–cysteine 188. Residues 69–85 (WQITGLADRWVIMGPGY) are interaction with host N-linked glycan. The segment at 256–288 (YSLSEKVTTKNKFQWPLVGETELAIEIAASQSW) is part of the transmembrane beta-barrel after proteolytic activation of the toxin and insertion into the host membrane. The tract at residues 346 to 355 (RWGGNAWYTH) is interaction with glycans from host GPI-anchor. Positions 444 to 488 (TRSAKAAQLRSASAEEVALTSVDLDSEALANEGFGNVSLTIVPVQ) are excised as a propeptide.

It belongs to the aerolysin family. Homodimer in solution; homoheptamer in the host membrane. After binding to GPI-anchored proteins in target membranes and proteolytic removal of the C-terminal propeptide, the protein assembles into a heptameric pre-pore complex. A further conformation change leads to insertion into the host membrane. In terms of processing, proteolytic cleavage and subsequent release of the propeptide trigger a major conformation change, leading to the formation of a heptameric pre-pore that then inserts into the host membrane.

It localises to the secreted. The protein resides in the host cell membrane. Secreted, cytolytic toxin that forms pores in host membranes after proteolytic removal of a C-terminal propeptide, leading to destruction of the membrane permeability barrier and cell death. The pores are formed by transmembrane beta-strands and are approximately 3 nm in diameter. This Aeromonas sobria protein is Aerolysin (asa1).